A 470-amino-acid polypeptide reads, in one-letter code: Probable V-type proton ATPase subunit H 2 (470 aa).

It belongs to the V-ATPase H subunit family. V-ATPase is a heteromultimeric enzyme made up of two complexes: the ATP-hydrolytic V1 complex and the proton translocation V0 complex. The V1 complex consists of three catalytic AB heterodimers that form a heterohexamer, three peripheral stalks each consisting of EG heterodimers, one central rotor including subunits D and F, and the regulatory subunits C and H. The proton translocation complex V0 consists of the proton transport subunit a, a ring of proteolipid subunits c9c'', rotary subunit d, subunits e and f, and the accessory subunits vah-19/Ac45 and vah-20/PRR.

Functionally, subunit of the V1 complex of vacuolar(H+)-ATPase (V-ATPase), a multisubunit enzyme composed of a peripheral complex (V1) that hydrolyzes ATP and a membrane integral complex (V0) that translocates protons. V-ATPase is responsible for acidifying and maintaining the pH of intracellular compartments and in some cell types, is targeted to the plasma membrane, where it is responsible for acidifying the extracellular environment. Subunit H is essential for V-ATPase activity, but not for the assembly of the complex. In Caenorhabditis elegans, this protein is Probable V-type proton ATPase subunit H 2.